The primary structure comprises 466 residues: 3-isopropylmalate dehydratase large subunit (466 aa).

Residues Cys-347, Cys-407, and Cys-410 each coordinate [4Fe-4S] cluster.

It belongs to the aconitase/IPM isomerase family. LeuC type 1 subfamily. Heterodimer of LeuC and LeuD. [4Fe-4S] cluster serves as cofactor.

It catalyses the reaction (2R,3S)-3-isopropylmalate = (2S)-2-isopropylmalate. It participates in amino-acid biosynthesis; L-leucine biosynthesis; L-leucine from 3-methyl-2-oxobutanoate: step 2/4. Catalyzes the isomerization between 2-isopropylmalate and 3-isopropylmalate, via the formation of 2-isopropylmaleate. This chain is 3-isopropylmalate dehydratase large subunit, found in Shewanella pealeana (strain ATCC 700345 / ANG-SQ1).